The sequence spans 476 residues: Arginine biosynthesis bifunctional protein ArgJ, mitochondrial (476 aa).

Residues T193, K219, T237, E337, N471, and S476 each contribute to the substrate site. The active-site Nucleophile is T237.

This sequence belongs to the ArgJ family. Heterodimer of an alpha and a beta chain. Post-translationally, the alpha and beta chains are autoproteolytically processed from a single precursor protein within the mitochondrion.

It is found in the mitochondrion matrix. The enzyme catalyses N(2)-acetyl-L-ornithine + L-glutamate = N-acetyl-L-glutamate + L-ornithine. It carries out the reaction L-glutamate + acetyl-CoA = N-acetyl-L-glutamate + CoA + H(+). The protein operates within amino-acid biosynthesis; L-arginine biosynthesis; L-ornithine and N-acetyl-L-glutamate from L-glutamate and N(2)-acetyl-L-ornithine (cyclic): step 1/1. Its pathway is amino-acid biosynthesis; L-arginine biosynthesis; N(2)-acetyl-L-ornithine from L-glutamate: step 1/4. Catalyzes two activities which are involved in the cyclic version of arginine biosynthesis: the synthesis of acetylglutamate from glutamate and acetyl-CoA, and of ornithine by transacetylation between acetylornithine and glutamate. In Cryptococcus neoformans var. neoformans serotype D (strain B-3501A) (Filobasidiella neoformans), this protein is Arginine biosynthesis bifunctional protein ArgJ, mitochondrial.